The primary structure comprises 1140 residues: uncharacterized protein (1140 aa).

Disordered regions lie at residues 1–49, 97–243, 280–427, 512–541, 702–747, 916–1059, and 1080–1103; these read MGSS…TSPE, SSDI…STIS, TSSS…KSSV, ASST…DLSK, FSTP…STAS, CPEK…PIGR, and LSSS…GTSS. Over residues 105–129 the composition is skewed to polar residues; that stretch reads VNDVESSTSGPSNSYSALSSTNAQL. 3 stretches are compositionally biased toward low complexity: residues 130–154, 172–214, and 221–243; these read SSST…TSSS, TTAS…TTSD, and SSST…STIS. Positions 516 to 528 are enriched in polar residues; sequence LGSKVSSSNSRMA. 2 stretches are compositionally biased toward low complexity: residues 529-541 and 703-718; these read TSKT…DLSK and STPE…VTSE. Residues 719-733 are compositionally biased toward polar residues; it reads APSTVSSMTTSAPFI. Residues 734–747 show a composition bias toward low complexity; the sequence is NNSTSARPSPSTAS. The segment covering 949–961 has biased composition (basic and acidic residues); it reads SFKDMKTSQETKK. Positions 977–997 are enriched in low complexity; it reads EKTSPTTKASPSTSPSESKAA. Composition is skewed to polar residues over residues 998–1023, 1031–1055, and 1089–1103; these read GNTS…STSV, TKNS…STES, and RSTT…GTSS.

This is an uncharacterized protein from Saccharomyces cerevisiae (strain ATCC 204508 / S288c) (Baker's yeast).